Here is a 250-residue protein sequence, read N- to C-terminus: Cobalt transport protein CbiM (250 aa).

The N-terminal stretch at 1-26 is a signal peptide; it reads MNKKEKRIVAIAAAFALCFGISPAVN. The next 6 membrane-spanning stretches (helical) occupy residues 38 to 58, 68 to 88, 102 to 122, 134 to 154, 165 to 185, and 209 to 229; these read KYCI…YFSI, SITM…LKIP, LGAI…VLIF, TLGA…FGIY, LSGI…VTSI, and FAPT…VIMI.

It belongs to the CbiM family. In terms of assembly, forms an energy-coupling factor (ECF) transporter complex composed of an ATP-binding protein (A component, CbiO), a transmembrane protein (T component, CbiQ) and 2 possible substrate-capture proteins (S components, CbiM and CbiN) of unknown stoichimetry.

The protein resides in the cell membrane. It participates in cofactor biosynthesis; adenosylcobalamin biosynthesis. Its function is as follows. Part of the energy-coupling factor (ECF) transporter complex CbiMNOQ involved in cobalt import. The chain is Cobalt transport protein CbiM from Lachnoclostridium phytofermentans (strain ATCC 700394 / DSM 18823 / ISDg) (Clostridium phytofermentans).